A 286-amino-acid polypeptide reads, in one-letter code: MDSETRELRALEAEVAALQRECRMLQNAGEKASGAWKSFQKISQSDSEEWESLKDLRSQLEHLRSEHSFLSKLTGFNIRNYSKMEDIVNTEETEKDTKKVLQKHRLSGNCNMVTFQLEFEVLEMETKEKKSSIITDLSIIMEPTEYSELSEFASRAEEKRDLLMFFRSLHFFVEWCEYRENTFKHFKEKYPDTVYLLEGTCSHCMEIRSTRQPGFELVIVWKIQIDEEGMVFPKLDLLTKVPERALGLDKNRVIETAPLSFRSLLGVLGIEAALDSLIRLFSGDNN.

Residues 1–73 (MDSETRELRA…RSEHSFLSKL (73 aa)) are a coiled coil. Ser38 is modified (phosphoserine).

Belongs to the CENP-P/CTF19 family. As to quaternary structure, component of the CENPA-CAD complex, composed of CENPI, CENPK, CENPL, CENPO, CENPP, CENPQ, CENPR and CENPS. The CENPA-CAD complex interacts with the CENPA-NAC complex, at least composed of CENPA, CENPC, CENPH, CENPM, CENPN, CENPT and CENPU.

The protein localises to the nucleus. It is found in the chromosome. It localises to the centromere. Component of the CENPA-CAD (nucleosome distal) complex, a complex recruited to centromeres which is involved in assembly of kinetochore proteins, mitotic progression and chromosome segregation. May be involved in incorporation of newly synthesized CENPA into centromeres via its interaction with the CENPA-NAC complex. This is Centromere protein P (Cenpp) from Mus musculus (Mouse).